The following is a 489-amino-acid chain: Heme-based aerotactic transducer HemAT (489 aa).

A Methyl-accepting transducer domain is found at 218-454; the sequence is PLSSLEATSQ…EVAEMVDDVD (237 aa).

The protein belongs to the methyl-accepting chemotaxis (MCP) protein family. In terms of assembly, homotetramer.

Functionally, heme-containing signal transducer responsible for aerotaxis, the migratory response toward or away from oxygen. In Halobacterium salinarum (strain ATCC 700922 / JCM 11081 / NRC-1) (Halobacterium halobium), this protein is Heme-based aerotactic transducer HemAT (hemAT).